A 122-amino-acid chain; its full sequence is Large ribosomal subunit protein bL19 (122 aa).

Belongs to the bacterial ribosomal protein bL19 family.

Its function is as follows. This protein is located at the 30S-50S ribosomal subunit interface and may play a role in the structure and function of the aminoacyl-tRNA binding site. This is Large ribosomal subunit protein bL19 (rplS) from Synechocystis sp. (strain ATCC 27184 / PCC 6803 / Kazusa).